Consider the following 336-residue polypeptide: Solute-binding protein Csal_2479 (336 aa).

The first 33 residues, 1 to 33 (MQTNKRLKMASCVKAAAMLGMLLSVSISTTAQA), serve as a signal peptide directing secretion. Beta-D-glucuronate is bound by residues H42, Q80, R156, R177, Y200, 217 to 218 (NN), and E244.

This sequence belongs to the bacterial solute-binding protein 7 family. As to quaternary structure, the complex is comprised of an extracytoplasmic solute-binding protein and a heteromeric permease formed by two transmembrane proteins.

The protein resides in the periplasm. In terms of biological role, solute-binding protein that binds D-glucuronate (in vitro). Probably part of a tripartite ATP-independent periplasmic (TRAP) transport system that mediates solute transport into the cytoplasm. The sequence is that of Solute-binding protein Csal_2479 from Chromohalobacter salexigens (strain ATCC BAA-138 / DSM 3043 / CIP 106854 / NCIMB 13768 / 1H11).